Consider the following 571-residue polypeptide: MTLNGWTQITLYGAVVLALVKPLGWYMTRVFTGERTLLSPVLAPIERGLYRAAGIDARQEQTWLGYAGALLLFHVFGFLVLYAILRLQAALPLNPADQAAVAPDLAFNTSASFITNTNWQNYGGESTLSYLSQMLGLTHQNFLSAATGIAVAVALIRGFARASTRTLGSFWVDLTRAILYVLLPICILYTLFLVWQGIPQTLGAYIDATTLEGGKQTIALGPVASQVAIKMLGTNGGGFFNANAAHPFENPTALSNFVQMVSIFAIGAALTNVFGRMVGDERQGWAILAAMGALFLAGVAVAYWAEANGSPVLASFGLSGGNLEGKEVRFDIAASALFAVVTTAASCGAVNAMHDSFTALGGMIPLVNMQLGEVIIGGVGAGLYGMLIFVVVAIFVAGLMVGRTPEYLGKKIETKEVKMAMLGILCLPLMMLGFTALATVLPTGLAGPANAGPHGFSEILYAYTSAAANNGSAFAGLSGNTPFYNATLAVGMLVGRFFVIIPALAIAGALAAKKTVPASAGTFPTDGALFVGLLVGVILIIGGLTFFPALALGPVVEHLAGAAGQTFAMGD.

The next 11 membrane-spanning stretches (helical) occupy residues 5–25 (GWTQ…PLGW), 64–84 (LGYA…LYAI), 136–156 (GLTH…VALI), 178–198 (ILYV…WQGI), 254–274 (LSNF…TNVF), 285–305 (WAIL…AYWA), 330–350 (FDIA…CGAV), 357–379 (FTAL…IGGV), 421–441 (MLGI…ATVL), 488–508 (LAVG…AIAG), and 527–547 (GALF…LTFF).

This sequence belongs to the KdpA family. In terms of assembly, the system is composed of three essential subunits: KdpA, KdpB and KdpC.

The protein resides in the cell inner membrane. Its function is as follows. Part of the high-affinity ATP-driven potassium transport (or Kdp) system, which catalyzes the hydrolysis of ATP coupled with the electrogenic transport of potassium into the cytoplasm. This subunit binds the periplasmic potassium ions and delivers the ions to the membrane domain of KdpB through an intramembrane tunnel. The protein is Potassium-transporting ATPase potassium-binding subunit of Methylobacterium nodulans (strain LMG 21967 / CNCM I-2342 / ORS 2060).